Here is a 217-residue protein sequence, read N- to C-terminus: ATP phosphoribosyltransferase (217 aa).

Belongs to the ATP phosphoribosyltransferase family. Short subfamily. As to quaternary structure, heteromultimer composed of HisG and HisZ subunits.

The protein localises to the cytoplasm. It catalyses the reaction 1-(5-phospho-beta-D-ribosyl)-ATP + diphosphate = 5-phospho-alpha-D-ribose 1-diphosphate + ATP. It functions in the pathway amino-acid biosynthesis; L-histidine biosynthesis; L-histidine from 5-phospho-alpha-D-ribose 1-diphosphate: step 1/9. Catalyzes the condensation of ATP and 5-phosphoribose 1-diphosphate to form N'-(5'-phosphoribosyl)-ATP (PR-ATP). Has a crucial role in the pathway because the rate of histidine biosynthesis seems to be controlled primarily by regulation of HisG enzymatic activity. This chain is ATP phosphoribosyltransferase, found in Burkholderia orbicola (strain MC0-3).